Reading from the N-terminus, the 317-residue chain is MGVIIYSVLISFLFSILQGPLFIPILHKLKFGQPIREDGPKNHMKKAGTPTMGGIIFITTAIIAMIIMRKNLNSNAVFAFVCFFSFAMIGLIDDSLKILHKKNEGLTSKQKFLLQIIVSAAISYYAYIRFGSDTFIPFLKITWTLPPIVYMAAVVFYFVAVTNAVNLTDGLDGLASSVTILVVTFFTVVSFSWHQYELSVFCGIIVGILLGFLKYNSYPAQIFMGDTGSIGLGGAVAAIALVLKLPLLVIIVGGIYVIEVLSDIIQVSYFKLTGKRVFKMAPIHHHFEKLGWHETKVVSVFSIVTVILCLIAFLSLI.

The next 9 membrane-spanning stretches (helical) occupy residues Val-3–Ile-23, Gly-48–Met-68, Leu-72–Ile-92, Phe-112–Ser-132, Ile-141–Val-161, Leu-171–Phe-191, Trp-193–Leu-213, Ala-238–Ile-258, and Val-297–Ile-317.

Belongs to the glycosyltransferase 4 family. MraY subfamily. It depends on Mg(2+) as a cofactor.

The protein localises to the cell membrane. It catalyses the reaction UDP-N-acetyl-alpha-D-muramoyl-L-alanyl-gamma-D-glutamyl-meso-2,6-diaminopimeloyl-D-alanyl-D-alanine + di-trans,octa-cis-undecaprenyl phosphate = di-trans,octa-cis-undecaprenyl diphospho-N-acetyl-alpha-D-muramoyl-L-alanyl-D-glutamyl-meso-2,6-diaminopimeloyl-D-alanyl-D-alanine + UMP. It participates in cell wall biogenesis; peptidoglycan biosynthesis. Catalyzes the initial step of the lipid cycle reactions in the biosynthesis of the cell wall peptidoglycan: transfers peptidoglycan precursor phospho-MurNAc-pentapeptide from UDP-MurNAc-pentapeptide onto the lipid carrier undecaprenyl phosphate, yielding undecaprenyl-pyrophosphoryl-MurNAc-pentapeptide, known as lipid I. The protein is Phospho-N-acetylmuramoyl-pentapeptide-transferase of Clostridium acetobutylicum (strain ATCC 824 / DSM 792 / JCM 1419 / IAM 19013 / LMG 5710 / NBRC 13948 / NRRL B-527 / VKM B-1787 / 2291 / W).